Reading from the N-terminus, the 334-residue chain is Small ribosomal subunit protein uS2 (334 aa).

It belongs to the universal ribosomal protein uS2 family.

This is Small ribosomal subunit protein uS2 from Xanthobacter autotrophicus (strain ATCC BAA-1158 / Py2).